The following is a 625-amino-acid chain: tRNA uridine 5-carboxymethylaminomethyl modification enzyme MnmG (625 aa).

Residue 14–19 participates in FAD binding; sequence GAGHAG. 273–287 lines the NAD(+) pocket; that stretch reads GPRYCPSIEDKIVRF.

Belongs to the MnmG family. Homodimer. Heterotetramer of two MnmE and two MnmG subunits. The cofactor is FAD.

Its subcellular location is the cytoplasm. Functionally, NAD-binding protein involved in the addition of a carboxymethylaminomethyl (cmnm) group at the wobble position (U34) of certain tRNAs, forming tRNA-cmnm(5)s(2)U34. This is tRNA uridine 5-carboxymethylaminomethyl modification enzyme MnmG from Clostridium botulinum (strain Okra / Type B1).